The sequence spans 419 residues: Haloacid dehalogenase-like hydrolase domain-containing 5 (419 aa).

The signal sequence occupies residues 1-15 (MAALAGLGVLGAGRH).

It belongs to the HAD-like hydrolase superfamily.

The polypeptide is Haloacid dehalogenase-like hydrolase domain-containing 5 (Mus musculus (Mouse)).